Here is a 243-residue protein sequence, read N- to C-terminus: MQITLPGVVLTNSPAEKQHVIVKIFSPAGLLSAFAKNGASLSCDFRESLFPISFSLFTIQQSPPKMRKVIQGELQNPFTTIKSSYPLLQSAGKMIQAILKTQWHEKPSPHLFSLFFNFLQRIPETQYPNFFSSMFLLKLLQHEGSLDLSRSCTLCKTSLESSTIYRYEGALFCEKHAHEETISFSQEEDHILRVIVQAKKFQELVCLAEFPIDIDTKIDALFSSFLSETSEPSSLYYKGKTLL.

It belongs to the RecO family.

In terms of biological role, involved in DNA repair and RecF pathway recombination. The polypeptide is DNA repair protein RecO (Chlamydia trachomatis serovar L2 (strain ATCC VR-902B / DSM 19102 / 434/Bu)).